The following is a 39-amino-acid chain: SYSMEHFRWGKPVGKKRRPVKVYPNGAENESAEAFPVEV.

Ser1 is subject to N-acetylserine. The residue at position 13 (Val13) is a Valine amide. Ser31 carries the phosphoserine modification.

Belongs to the POMC family. As to expression, expressed in the pituitary gland.

Its subcellular location is the secreted. Functionally, precursor protein for pituitary hormones that regulate stress and environmental adaptation. Stimulates the adrenal glands to release cortisol. In terms of biological role, anorexigenic peptide. Increases the pigmentation of skin by increasing melanin production in melanocytes. The polypeptide is Pro-opiomelanocortin (POMC) (Oryctolagus cuniculus (Rabbit)).